The following is a 211-amino-acid chain: Ribosomal RNA small subunit methyltransferase G (211 aa).

S-adenosyl-L-methionine contacts are provided by Gly73, Phe78, and Arg141.

This sequence belongs to the methyltransferase superfamily. RNA methyltransferase RsmG family.

The protein resides in the cytoplasm. It carries out the reaction guanosine(527) in 16S rRNA + S-adenosyl-L-methionine = N(7)-methylguanosine(527) in 16S rRNA + S-adenosyl-L-homocysteine. Functionally, specifically methylates the N7 position of guanine in position 527 of 16S rRNA. In Jannaschia sp. (strain CCS1), this protein is Ribosomal RNA small subunit methyltransferase G.